A 190-amino-acid chain; its full sequence is ATP synthase subunit b (190 aa).

A helical transmembrane segment spans residues 24–44; sequence IVGSLICFVVILFFFWKLVLP.

The protein belongs to the ATPase B chain family. In terms of assembly, F-type ATPases have 2 components, F(1) - the catalytic core - and F(0) - the membrane proton channel. F(1) has five subunits: alpha(3), beta(3), gamma(1), delta(1), epsilon(1). F(0) has three main subunits: a(1), b(2) and c(10-14). The alpha and beta chains form an alternating ring which encloses part of the gamma chain. F(1) is attached to F(0) by a central stalk formed by the gamma and epsilon chains, while a peripheral stalk is formed by the delta and b chains.

The protein localises to the cell membrane. Functionally, f(1)F(0) ATP synthase produces ATP from ADP in the presence of a proton or sodium gradient. F-type ATPases consist of two structural domains, F(1) containing the extramembraneous catalytic core and F(0) containing the membrane proton channel, linked together by a central stalk and a peripheral stalk. During catalysis, ATP synthesis in the catalytic domain of F(1) is coupled via a rotary mechanism of the central stalk subunits to proton translocation. In terms of biological role, component of the F(0) channel, it forms part of the peripheral stalk, linking F(1) to F(0). The polypeptide is ATP synthase subunit b (Leifsonia xyli subsp. xyli (strain CTCB07)).